Reading from the N-terminus, the 117-residue chain is Large ribosomal subunit protein uL18 (117 aa).

Belongs to the universal ribosomal protein uL18 family. In terms of assembly, part of the 50S ribosomal subunit; part of the 5S rRNA/L5/L18/L25 subcomplex. Contacts the 5S and 23S rRNAs.

Functionally, this is one of the proteins that bind and probably mediate the attachment of the 5S RNA into the large ribosomal subunit, where it forms part of the central protuberance. This is Large ribosomal subunit protein uL18 from Aeromonas salmonicida (strain A449).